A 345-amino-acid polypeptide reads, in one-letter code: Transcription initiation factor IIB (345 aa).

The segment at 20-53 (IVLTCPECKVYPPKIVERFSEGDVVCALCGLVLS) adopts a TFIIB-type zinc-finger fold. Residues Cys24, Cys27, Cys45, and Cys48 each contribute to the Zn(2+) site. The segment covering 65–78 (TFSNDDHNGDDPSR) has biased composition (basic and acidic residues). A disordered region spans residues 65–93 (TFSNDDHNGDDPSRVGEASNPLLDGNNLS). Tandem repeats lie at residues 136–212 (LCDA…IMKN) and 242–318 (FCSH…ILYE).

It belongs to the TFIIB family. As to quaternary structure, associates with TFIID-IIA (DA complex) to form TFIID-IIA-IIB (DAB-complex) which is then recognized by polymerase II.

It is found in the nucleus. Functionally, general factor that plays a major role in the activation of eukaryotic genes transcribed by RNA polymerase II. This is Transcription initiation factor IIB (SUA7) from Saccharomyces cerevisiae (strain ATCC 204508 / S288c) (Baker's yeast).